A 37-amino-acid chain; its full sequence is Large ribosomal subunit protein bL12 (37 aa).

The protein belongs to the bacterial ribosomal protein bL12 family. As to quaternary structure, homodimer. Part of the ribosomal stalk of the 50S ribosomal subunit. Forms a multimeric L10(L12)X complex, where L10 forms an elongated spine to which 2 to 4 L12 dimers bind in a sequential fashion. Binds GTP-bound translation factors.

Functionally, forms part of the ribosomal stalk which helps the ribosome interact with GTP-bound translation factors. Is thus essential for accurate translation. This is Large ribosomal subunit protein bL12 (rplL) from Clostridium pasteurianum.